Reading from the N-terminus, the 135-residue chain is Serine protease inhibitor swm-1 (135 aa).

An N-terminal signal peptide occupies residues 1-16 (MRILVIITCIVAVATA). Intrachain disulfides connect Cys20–Cys53, Cys29–Cys48, Cys33–Cys44, Cys37–Cys73, Cys55–Cys67, Cys80–Cys114, Cys89–Cys109, Cys93–Cys105, Cys97–Cys133, and Cys116–Cys127. 2 consecutive TIL domains span residues 20-73 (CEAN…VSEC) and 80-133 (CPEN…KKDC). N-linked (GlcNAc...) asparagine glycosylation occurs at Asn83.

In male, expressed in the vas deferens cuboidal cells and, in posterior body wall and male-specific diagonal muscles. In hermaphrodites, expressed in posterior body wall muscles and spermatheca.

Its subcellular location is the secreted. The protein localises to the cytoplasmic vesicle. It is found in the secretory vesicle lumen. In terms of biological role, serine protease inhibitor. Probably by inhibiting serine protease tyr-5 in males, prevents the maturation of spermatids into mature motile spermatozoa until their transfer into a hermaphrodite. Also required for efficient sperm transfer and thus for male fertility. The protein is Serine protease inhibitor swm-1 of Caenorhabditis elegans.